A 229-amino-acid chain; its full sequence is Putative N-acetylmannosamine-6-phosphate 2-epimerase (229 aa).

The protein belongs to the NanE family.

It carries out the reaction an N-acyl-D-glucosamine 6-phosphate = an N-acyl-D-mannosamine 6-phosphate. Its pathway is amino-sugar metabolism; N-acetylneuraminate degradation; D-fructose 6-phosphate from N-acetylneuraminate: step 3/5. Functionally, converts N-acetylmannosamine-6-phosphate (ManNAc-6-P) to N-acetylglucosamine-6-phosphate (GlcNAc-6-P). This is Putative N-acetylmannosamine-6-phosphate 2-epimerase from Pediococcus pentosaceus (strain ATCC 25745 / CCUG 21536 / LMG 10740 / 183-1w).